The primary structure comprises 429 residues: 5-methylthioadenosine/S-adenosylhomocysteine deaminase (429 aa).

Positions 66 and 68 each coordinate Zn(2+). Substrate-binding residues include E95, R147, R158, and H181. H208 lines the Zn(2+) pocket. Substrate-binding residues include E211 and D296. D296 contributes to the Zn(2+) binding site.

It belongs to the metallo-dependent hydrolases superfamily. MTA/SAH deaminase family. The cofactor is Zn(2+).

The enzyme catalyses S-adenosyl-L-homocysteine + H2O + H(+) = S-inosyl-L-homocysteine + NH4(+). The catalysed reaction is S-methyl-5'-thioadenosine + H2O + H(+) = S-methyl-5'-thioinosine + NH4(+). Its function is as follows. Catalyzes the deamination of 5-methylthioadenosine and S-adenosyl-L-homocysteine into 5-methylthioinosine and S-inosyl-L-homocysteine, respectively. Is also able to deaminate adenosine. The polypeptide is 5-methylthioadenosine/S-adenosylhomocysteine deaminase (Caldicellulosiruptor saccharolyticus (strain ATCC 43494 / DSM 8903 / Tp8T 6331)).